We begin with the raw amino-acid sequence, 22 residues long: thr operon leader peptide (22 aa).

The disordered stretch occupies residues 1-22 (MRNISLTTTIITTTDTTGNGAG). Over residues 7 to 22 (TTTIITTTDTTGNGAG) the composition is skewed to low complexity.

Belongs to the thr operon leader peptide family.

Its function is as follows. This protein is involved in control of the biosynthesis of threonine. This Serratia marcescens protein is thr operon leader peptide.